We begin with the raw amino-acid sequence, 340 residues long: NAD kinase (340 aa).

The Proton acceptor role is filled by Asp-66. NAD(+) is bound by residues 66–67 (DG), Arg-71, 141–142 (ND), Lys-152, Asp-171, 182–187 (TAYAFS), and Ala-206. The disordered stretch occupies residues 321–340 (AGVAGTEPDKPGERDGKAGS). The segment covering 327–340 (EPDKPGERDGKAGS) has biased composition (basic and acidic residues).

Belongs to the NAD kinase family. It depends on a divalent metal cation as a cofactor.

It is found in the cytoplasm. It carries out the reaction NAD(+) + ATP = ADP + NADP(+) + H(+). Functionally, involved in the regulation of the intracellular balance of NAD and NADP, and is a key enzyme in the biosynthesis of NADP. Catalyzes specifically the phosphorylation on 2'-hydroxyl of the adenosine moiety of NAD to yield NADP. The sequence is that of NAD kinase from Bifidobacterium longum (strain DJO10A).